Reading from the N-terminus, the 1390-residue chain is DNA-directed RNA polymerase subunit beta (1390 aa).

The tract at residues 556 to 576 is disordered; sequence KLADQDAENDPDSDLGTKSSN.

It belongs to the RNA polymerase beta chain family. The RNAP catalytic core consists of 2 alpha, 1 beta, 1 beta' and 1 omega subunit. When a sigma factor is associated with the core the holoenzyme is formed, which can initiate transcription.

The catalysed reaction is RNA(n) + a ribonucleoside 5'-triphosphate = RNA(n+1) + diphosphate. Functionally, DNA-dependent RNA polymerase catalyzes the transcription of DNA into RNA using the four ribonucleoside triphosphates as substrates. This Mycoplasmoides gallisepticum (strain R(low / passage 15 / clone 2)) (Mycoplasma gallisepticum) protein is DNA-directed RNA polymerase subunit beta.